Here is a 356-residue protein sequence, read N- to C-terminus: Outer spore wall protein LDS2 (356 aa).

Over 1-92 (MSTRPQPDWY…ISESVGNSDY (92 aa)) the chain is Cytoplasmic. Residues 93–113 (LHLFFLIFGYYLLNLLLIVAF) form a helical membrane-spanning segment. At 114 to 115 (TS) the chain is on the extracellular side. Residues 116-136 (ILAWSLLVCIYLPFLGLFALP) traverse the membrane as a helical segment. Residues 137-213 (LAYMQTILIS…KRFYLVSLPQ (77 aa)) lie on the Cytoplasmic side of the membrane. Residues 214-234 (FFIFFFWYIFIAFMFLLLLLV) traverse the membrane as a helical segment. The Extracellular segment spans residues 235-294 (PIVGPITINMLPFSPGMGFYYFEPYFVDVLHLDSRKLSKVYYKGFAKWLLYSISSGLLES). Residues 295-315 (IPILGGLFIGTNAVGASLWIV) form a helical membrane-spanning segment. Over 316 to 356 (KEIKDRDQPAVPPSPPAEPEEPTVGSYAPPIQQSIAHINPP) the chain is Cytoplasmic. The interval 322 to 356 (DQPAVPPSPPAEPEEPTVGSYAPPIQQSIAHINPP) is disordered. Residues 346–356 (IQQSIAHINPP) are compositionally biased toward polar residues.

This sequence belongs to the LDS family.

The protein localises to the prospore membrane. Its subcellular location is the lipid droplet. It localises to the spore wall. Involved in spore wall assembly. This chain is Outer spore wall protein LDS2, found in Saccharomyces cerevisiae (strain ATCC 204508 / S288c) (Baker's yeast).